A 92-amino-acid polypeptide reads, in one-letter code: N(2)-fixation sustaining protein CowN (92 aa).

The protein belongs to the CowN family.

Functionally, is required to sustain N(2)-dependent growth in the presence of low levels of carbon monoxide (CO). Probably acts by protecting the N(2) fixation ability of the nitrogenase complex, which is inactivated in the presence of CO. The protein is N(2)-fixation sustaining protein CowN of Rhodopseudomonas palustris (strain ATCC BAA-98 / CGA009).